Reading from the N-terminus, the 207-residue chain is Large ribosomal subunit protein uL4 (207 aa).

The interval 56–76 is disordered; the sequence is EVRGGGRKPWRQKGTGRARAG. Over residues 60 to 71 the composition is skewed to basic residues; it reads GGRKPWRQKGTG.

It belongs to the universal ribosomal protein uL4 family. In terms of assembly, part of the 50S ribosomal subunit.

Its function is as follows. One of the primary rRNA binding proteins, this protein initially binds near the 5'-end of the 23S rRNA. It is important during the early stages of 50S assembly. It makes multiple contacts with different domains of the 23S rRNA in the assembled 50S subunit and ribosome. In terms of biological role, forms part of the polypeptide exit tunnel. The chain is Large ribosomal subunit protein uL4 from Desulfitobacterium hafniense (strain DSM 10664 / DCB-2).